A 295-amino-acid polypeptide reads, in one-letter code: Protoheme IX farnesyltransferase (295 aa).

9 helical membrane-spanning segments follow: residues 27–47, 48–68, 94–114, 117–137, 144–164, 171–191, 216–236, 241–261, and 272–292; these read LVVF…HPFL, ALIS…INMW, SALE…AIAV, ISAA…TIWL, NIVI…AVVT, SFIL…ALSL, KHIL…ALFL, FYLS…ISVI, and MFSY…FCSI.

Belongs to the UbiA prenyltransferase family. Protoheme IX farnesyltransferase subfamily.

The protein localises to the cell membrane. It carries out the reaction heme b + (2E,6E)-farnesyl diphosphate + H2O = Fe(II)-heme o + diphosphate. The protein operates within porphyrin-containing compound metabolism; heme O biosynthesis; heme O from protoheme: step 1/1. Its function is as follows. Converts heme B (protoheme IX) to heme O by substitution of the vinyl group on carbon 2 of heme B porphyrin ring with a hydroxyethyl farnesyl side group. This Wolbachia pipientis subsp. Culex pipiens (strain wPip) protein is Protoheme IX farnesyltransferase.